The following is a 501-amino-acid chain: Aldehyde dehydrogenase family 2 member C4 (501 aa).

245 to 250 (GSTDVG) contacts NAD(+). Glu-268 serves as the catalytic Proton acceptor. Residue Cys-302 is the Nucleophile of the active site.

Belongs to the aldehyde dehydrogenase family. In terms of assembly, homotetramer.

The protein resides in the cytoplasm. It localises to the cytosol. It carries out the reaction an aldehyde + NAD(+) + H2O = a carboxylate + NADH + 2 H(+). In terms of biological role, involved in ferulic acid and sinapic acid biosynthesis by oxidation of conyferylaldehyde and sinapaldehyde, respectively. Can oxidize L-lactaldehyde. Possesses activity on acetaldehyde and glycolaldehyde in vitro. The protein is Aldehyde dehydrogenase family 2 member C4 (ALDH2C4) of Arabidopsis thaliana (Mouse-ear cress).